Consider the following 501-residue polypeptide: Putative BTB/POZ domain-containing protein L107 (501 aa).

The region spanning 16–87 is the BTB domain; sequence TDLELTLVDS…FYITDIERSQ (72 aa).

This sequence belongs to the mimivirus BTB/WD family.

The protein is Putative BTB/POZ domain-containing protein L107 of Acanthamoeba polyphaga mimivirus (APMV).